We begin with the raw amino-acid sequence, 305 residues long: Acetyl-coenzyme A carboxylase carboxyl transferase subunit beta (305 aa).

The 270-residue stretch at Gly23–Lys292 folds into the CoA carboxyltransferase N-terminal domain. Cys27, Cys30, Cys46, and Cys49 together coordinate Zn(2+). The C4-type zinc-finger motif lies at Cys27–Cys49. A disordered region spans residues Phe281–Asn305.

It belongs to the AccD/PCCB family. As to quaternary structure, acetyl-CoA carboxylase is a heterohexamer composed of biotin carboxyl carrier protein (AccB), biotin carboxylase (AccC) and two subunits each of ACCase subunit alpha (AccA) and ACCase subunit beta (AccD). Zn(2+) is required as a cofactor.

The protein resides in the cytoplasm. The catalysed reaction is N(6)-carboxybiotinyl-L-lysyl-[protein] + acetyl-CoA = N(6)-biotinyl-L-lysyl-[protein] + malonyl-CoA. It participates in lipid metabolism; malonyl-CoA biosynthesis; malonyl-CoA from acetyl-CoA: step 1/1. Functionally, component of the acetyl coenzyme A carboxylase (ACC) complex. Biotin carboxylase (BC) catalyzes the carboxylation of biotin on its carrier protein (BCCP) and then the CO(2) group is transferred by the transcarboxylase to acetyl-CoA to form malonyl-CoA. This is Acetyl-coenzyme A carboxylase carboxyl transferase subunit beta from Protochlamydia amoebophila (strain UWE25).